The chain runs to 321 residues: Porphobilinogen deaminase (321 aa).

Cys243 is modified (S-(dipyrrolylmethanemethyl)cysteine).

This sequence belongs to the HMBS family. As to quaternary structure, monomer. It depends on dipyrromethane as a cofactor.

It carries out the reaction 4 porphobilinogen + H2O = hydroxymethylbilane + 4 NH4(+). It functions in the pathway porphyrin-containing compound metabolism; protoporphyrin-IX biosynthesis; coproporphyrinogen-III from 5-aminolevulinate: step 2/4. Tetrapolymerization of the monopyrrole PBG into the hydroxymethylbilane pre-uroporphyrinogen in several discrete steps. The protein is Porphobilinogen deaminase of Histophilus somni (strain 129Pt) (Haemophilus somnus).